Consider the following 214-residue polypeptide: uncharacterized protein (214 aa).

Residues 1 to 194 form the AMMECR1 domain; the sequence is MVSANREMAV…MHYSEYLSYV (194 aa).

This is an uncharacterized protein from Arabidopsis thaliana (Mouse-ear cress).